The following is a 122-amino-acid chain: Large ribosomal subunit protein uL14 (122 aa).

The protein belongs to the universal ribosomal protein uL14 family. Part of the 50S ribosomal subunit. Forms a cluster with proteins L3 and L19. In the 70S ribosome, L14 and L19 interact and together make contacts with the 16S rRNA in bridges B5 and B8.

Binds to 23S rRNA. Forms part of two intersubunit bridges in the 70S ribosome. The polypeptide is Large ribosomal subunit protein uL14 (Limosilactobacillus fermentum (strain NBRC 3956 / LMG 18251) (Lactobacillus fermentum)).